A 377-amino-acid polypeptide reads, in one-letter code: Carbamoyl phosphate synthase small chain (377 aa).

The segment at 1–186 (MSTPALLVLA…LGKGFVTPDE (186 aa)) is CPSase. Residues Ser-47, Gly-238, and Gly-240 each coordinate L-glutamine. The 188-residue stretch at 190–377 (HVVAYDFGVK…IGNMKAAKRA (188 aa)) folds into the Glutamine amidotransferase type-1 domain. Cys-266 functions as the Nucleophile in the catalytic mechanism. Positions 267, 270, 308, 310, and 311 each coordinate L-glutamine. Residues His-350 and Glu-352 contribute to the active site.

This sequence belongs to the CarA family. As to quaternary structure, composed of two chains; the small (or glutamine) chain promotes the hydrolysis of glutamine to ammonia, which is used by the large (or ammonia) chain to synthesize carbamoyl phosphate. Tetramer of heterodimers (alpha,beta)4.

The enzyme catalyses hydrogencarbonate + L-glutamine + 2 ATP + H2O = carbamoyl phosphate + L-glutamate + 2 ADP + phosphate + 2 H(+). The catalysed reaction is L-glutamine + H2O = L-glutamate + NH4(+). It participates in amino-acid biosynthesis; L-arginine biosynthesis; carbamoyl phosphate from bicarbonate: step 1/1. Its pathway is pyrimidine metabolism; UMP biosynthesis via de novo pathway; (S)-dihydroorotate from bicarbonate: step 1/3. Small subunit of the glutamine-dependent carbamoyl phosphate synthetase (CPSase). CPSase catalyzes the formation of carbamoyl phosphate from the ammonia moiety of glutamine, carbonate, and phosphate donated by ATP, constituting the first step of 2 biosynthetic pathways, one leading to arginine and/or urea and the other to pyrimidine nucleotides. The small subunit (glutamine amidotransferase) binds and cleaves glutamine to supply the large subunit with the substrate ammonia. The protein is Carbamoyl phosphate synthase small chain of Neisseria meningitidis serogroup A / serotype 4A (strain DSM 15465 / Z2491).